The sequence spans 229 residues: Cytidylate kinase (229 aa).

Position 12–20 (12–20 (GPSGAGKGT)) interacts with ATP.

The protein belongs to the cytidylate kinase family. Type 1 subfamily.

The protein resides in the cytoplasm. It carries out the reaction CMP + ATP = CDP + ADP. It catalyses the reaction dCMP + ATP = dCDP + ADP. This is Cytidylate kinase from Pseudomonas paraeruginosa (strain DSM 24068 / PA7) (Pseudomonas aeruginosa (strain PA7)).